Reading from the N-terminus, the 651-residue chain is Probable replication restart protein PriA (651 aa).

Residues Cys-371, Cys-374, Cys-380, Cys-383, Cys-399, Cys-402, Cys-411, and Cys-414 each contribute to the Zn(2+) site.

This sequence belongs to the helicase family. PriA subfamily. As to quaternary structure, component of the replication restart primosome. The cofactor is Zn(2+).

Its function is as follows. Initiates the restart of stalled replication forks, which reloads the replicative helicase on sites other than the origin of replication. Recognizes and binds to abandoned replication forks and remodels them to uncover a helicase loading site. Promotes assembly of the primosome at these replication forks. The protein is Probable replication restart protein PriA of Mycobacterium leprae (strain TN).